The following is a 289-amino-acid chain: S-methyl-5'-thioadenosine phosphorylase (289 aa).

Phosphate is bound by residues S24, 66–67 (RH), and 99–100 (TA). M202 provides a ligand contact to substrate. T203 serves as a coordination point for phosphate. 226–228 (DYD) is a binding site for substrate.

This sequence belongs to the PNP/MTAP phosphorylase family. MTAP subfamily. In terms of assembly, homotrimer. In embryos, expressed in the fat body and visceral mesoderm.

It is found in the cytoplasm. It localises to the nucleus. It catalyses the reaction S-methyl-5'-thioadenosine + phosphate = 5-(methylsulfanyl)-alpha-D-ribose 1-phosphate + adenine. It functions in the pathway amino-acid biosynthesis; L-methionine biosynthesis via salvage pathway; S-methyl-5-thio-alpha-D-ribose 1-phosphate from S-methyl-5'-thioadenosine (phosphorylase route): step 1/1. Functionally, catalyzes the reversible phosphorylation of S-methyl-5'-thioadenosine (MTA) to adenine and 5-methylthioribose-1-phosphate. Involved in the breakdown of MTA, a major by-product of polyamine biosynthesis. Responsible for the first step in the methionine salvage pathway after MTA has been generated from S-adenosylmethionine. Has broad substrate specificity with 6-aminopurine nucleosides as preferred substrates. In Drosophila melanogaster (Fruit fly), this protein is S-methyl-5'-thioadenosine phosphorylase (Mtap).